The sequence spans 394 residues: Small ribosomal subunit protein uS2m (394 aa).

The transit peptide at 1–25 directs the protein to the mitochondrion; that stretch reads MQRHVFARNFRRLSLLRNPSLTKRF.

This sequence belongs to the universal ribosomal protein uS2 family. Component of the mitochondrial small ribosomal subunit (mt-SSU). Mature yeast 74S mitochondrial ribosomes consist of a small (37S) and a large (54S) subunit. The 37S small subunit contains a 15S ribosomal RNA (15S mt-rRNA) and 34 different proteins. The 54S large subunit contains a 21S rRNA (21S mt-rRNA) and 46 different proteins.

The protein localises to the mitochondrion. Its function is as follows. Component of the mitochondrial ribosome (mitoribosome), a dedicated translation machinery responsible for the synthesis of mitochondrial genome-encoded proteins, including at least some of the essential transmembrane subunits of the mitochondrial respiratory chain. The mitoribosomes are attached to the mitochondrial inner membrane and translation products are cotranslationally integrated into the membrane. This Saccharomyces cerevisiae (strain ATCC 204508 / S288c) (Baker's yeast) protein is Small ribosomal subunit protein uS2m (MRP4).